We begin with the raw amino-acid sequence, 448 residues long: Elongation factor 1-alpha (448 aa).

Positions Lys5 to Ser230 constitute a tr-type G domain. Residues Gly14–Ser21 are G1. Residue Gly14 to Ser21 participates in GTP binding. N6,N6-dimethyllysine is present on Lys55. The segment at Gly70–Asp74 is G2. N6,N6,N6-trimethyllysine is present on Lys79. The tract at residues Asp91 to Gly94 is G3. Residues Asp91 to His95 and Asn153 to Asp156 contribute to the GTP site. The segment at Asn153–Asp156 is G4. Lys187 bears the N6,N6,N6-trimethyllysine mark. Positions Ser194–Phe196 are G5. Lys261 is subject to N6-methyllysine. A 5-glutamyl glycerylphosphorylethanolamine modification is found at Glu289. Lys306 carries the post-translational modification N6,N6,N6-trimethyllysine. At Glu362 the chain carries 5-glutamyl glycerylphosphorylethanolamine. Position 396 is an N6,N6,N6-trimethyllysine (Lys396).

This sequence belongs to the TRAFAC class translation factor GTPase superfamily. Classic translation factor GTPase family. EF-Tu/EF-1A subfamily.

Its subcellular location is the cytoplasm. This protein promotes the GTP-dependent binding of aminoacyl-tRNA to the A-site of ribosomes during protein biosynthesis. This Solanum lycopersicum (Tomato) protein is Elongation factor 1-alpha.